The primary structure comprises 165 residues: Putative pre-16S rRNA nuclease (165 aa).

The protein belongs to the YqgF nuclease family.

The protein resides in the cytoplasm. In terms of biological role, could be a nuclease involved in processing of the 5'-end of pre-16S rRNA. The sequence is that of Putative pre-16S rRNA nuclease from Beijerinckia indica subsp. indica (strain ATCC 9039 / DSM 1715 / NCIMB 8712).